The chain runs to 250 residues: Urease accessory protein UreG 3 (250 aa).

Residues 1 to 24 (MPDNASAQQPGQPAQGPNEHYHQP) are disordered. The span at 7-17 (AQQPGQPAQGP) shows a compositional bias: low complexity. 37-44 (GPVGTGKS) serves as a coordination point for GTP. The disordered stretch occupies residues 230–250 (GTHVPTDPGPMAPHSHSHDGS).

The protein belongs to the SIMIBI class G3E GTPase family. UreG subfamily. In terms of assembly, homodimer. UreD, UreF and UreG form a complex that acts as a GTP-hydrolysis-dependent molecular chaperone, activating the urease apoprotein by helping to assemble the nickel containing metallocenter of UreC. The UreE protein probably delivers the nickel.

The protein localises to the cytoplasm. Facilitates the functional incorporation of the urease nickel metallocenter. This process requires GTP hydrolysis, probably effectuated by UreG. The sequence is that of Urease accessory protein UreG 3 from Streptomyces griseus subsp. griseus (strain JCM 4626 / CBS 651.72 / NBRC 13350 / KCC S-0626 / ISP 5235).